The chain runs to 333 residues: Nucleoid-associated protein APJL_0454 (333 aa).

This sequence belongs to the YejK family.

Its subcellular location is the cytoplasm. It localises to the nucleoid. This chain is Nucleoid-associated protein APJL_0454, found in Actinobacillus pleuropneumoniae serotype 3 (strain JL03).